A 396-amino-acid chain; its full sequence is 8-amino-7-oxononanoate synthase (396 aa).

R21 contributes to the substrate binding site. Residue 112 to 113 (GY) participates in pyridoxal 5'-phosphate binding. Substrate is bound at residue H137. The pyridoxal 5'-phosphate site is built by S183, H211, and T239. Residue K242 is modified to N6-(pyridoxal phosphate)lysine. T358 provides a ligand contact to substrate.

The protein belongs to the class-II pyridoxal-phosphate-dependent aminotransferase family. BioF subfamily. Homodimer. The cofactor is pyridoxal 5'-phosphate.

It catalyses the reaction 6-carboxyhexanoyl-[ACP] + L-alanine + H(+) = (8S)-8-amino-7-oxononanoate + holo-[ACP] + CO2. It participates in cofactor biosynthesis; biotin biosynthesis. Catalyzes the decarboxylative condensation of pimeloyl-[acyl-carrier protein] and L-alanine to produce 8-amino-7-oxononanoate (AON), [acyl-carrier protein], and carbon dioxide. The sequence is that of 8-amino-7-oxononanoate synthase from Bordetella petrii (strain ATCC BAA-461 / DSM 12804 / CCUG 43448).